A 152-amino-acid chain; its full sequence is Photosystem II extrinsic protein U, chloroplastic (152 aa).

Residues 1-35 (MDSTAFVGAAAPLRVAAAARSTICMAAADDKPVVS) constitute a chloroplast transit peptide. Residues 36–59 (RRAALTGAAAAALAAVAGSLPALA) constitute a thylakoid transit peptide.

The protein belongs to the PsbU family. In terms of assembly, PSII is composed of 1 copy each of membrane proteins PsbA, PsbB, PsbC, PsbD, PsbE, PsbF, PsbH, PsbI, PsbJ, PsbK, PsbL, PsbM, PsbT, PsbX, PsbY, PsbZ, Psb30/Ycf12, at least 3 peripheral proteins of the oxygen-evolving complex and a large number of cofactors. It forms dimeric complexes. The oxygen-evolving complex in red algae is composed of PsbO (OEC33), PsbQ', cytochrome c-550 and PsbU. Post-translationally, predicted to be translocated into the thylakoid lumen by the Tat system.

The protein resides in the plastid. Its subcellular location is the chloroplast thylakoid membrane. One of the extrinsic, lumenal subunits of photosystem II (PSII). PSII is a light-driven water plastoquinone oxidoreductase, using light energy to abstract electrons from H(2)O, generating a proton gradient subsequently used for ATP formation. The extrinsic proteins stabilize the structure of photosystem II oxygen-evolving complex (OEC), the ion environment of oxygen evolution and protect the OEC against heat-induced inactivation. This Pyropia yezoensis (Susabi-nori) protein is Photosystem II extrinsic protein U, chloroplastic.